The following is a 633-amino-acid chain: Breast carcinoma-amplified sequence 1 homolog (633 aa).

Disordered stretches follow at residues M1–N34 and S57–W422. 2 stretches are compositionally biased toward polar residues: residues K24–N34 and S57–K68. Phosphoserine is present on S127. Residues V278–M288 show a composition bias toward polar residues. The segment covering T300–C318 has biased composition (basic and acidic residues). S328 carries the post-translational modification Phosphoserine. T330 carries the phosphothreonine modification. Residues N359–E378 are compositionally biased toward polar residues. A Phosphoserine modification is found at S360. Residues S400 to A410 show a composition bias toward basic and acidic residues. Phosphoserine is present on residues S425 and S443. The interval E454–K633 is disordered. Residues T471–P481 show a composition bias toward basic and acidic residues. A compositionally biased stretch (polar residues) spans K510–K522. The residue at position 523 (T523) is a Phosphothreonine. At S525 the chain carries Phosphoserine. Over residues K537–A555 the composition is skewed to basic and acidic residues. S601 and S615 each carry phosphoserine. The interacts with DYNLL1 AND DYNLL2 stretch occupies residues M614–K633.

In terms of assembly, homodimer. Interacts with DYNLL1 and DYNLL2. In terms of tissue distribution, highly expressed in the brain and, more specifically, in oligodendrocytes. Expressed in the Schwann cells (at protein level).

Its subcellular location is the cytoplasm. In terms of biological role, required for myelination. This is Breast carcinoma-amplified sequence 1 homolog (Bcas1) from Mus musculus (Mouse).